Here is a 362-residue protein sequence, read N- to C-terminus: UDP-N-acetylglucosamine--N-acetylmuramyl-(pentapeptide) pyrophosphoryl-undecaprenol N-acetylglucosamine transferase (362 aa).

Residues 14 to 16 (TGG), arginine 170, serine 199, and glutamine 289 contribute to the UDP-N-acetyl-alpha-D-glucosamine site.

It belongs to the glycosyltransferase 28 family. MurG subfamily.

It is found in the cell inner membrane. It catalyses the reaction di-trans,octa-cis-undecaprenyl diphospho-N-acetyl-alpha-D-muramoyl-L-alanyl-D-glutamyl-meso-2,6-diaminopimeloyl-D-alanyl-D-alanine + UDP-N-acetyl-alpha-D-glucosamine = di-trans,octa-cis-undecaprenyl diphospho-[N-acetyl-alpha-D-glucosaminyl-(1-&gt;4)]-N-acetyl-alpha-D-muramoyl-L-alanyl-D-glutamyl-meso-2,6-diaminopimeloyl-D-alanyl-D-alanine + UDP + H(+). It functions in the pathway cell wall biogenesis; peptidoglycan biosynthesis. Its function is as follows. Cell wall formation. Catalyzes the transfer of a GlcNAc subunit on undecaprenyl-pyrophosphoryl-MurNAc-pentapeptide (lipid intermediate I) to form undecaprenyl-pyrophosphoryl-MurNAc-(pentapeptide)GlcNAc (lipid intermediate II). This chain is UDP-N-acetylglucosamine--N-acetylmuramyl-(pentapeptide) pyrophosphoryl-undecaprenol N-acetylglucosamine transferase, found in Borrelia hermsii (strain HS1 / DAH).